The sequence spans 92 residues: DNA-directed RNA polymerase subunit Rpo11 (92 aa).

The protein belongs to the archaeal Rpo11/eukaryotic RPB11/RPC19 RNA polymerase subunit family. In terms of assembly, part of the 13-subunit RNA polymerase complex.

It localises to the cytoplasm. The catalysed reaction is RNA(n) + a ribonucleoside 5'-triphosphate = RNA(n+1) + diphosphate. DNA-dependent RNA polymerase (RNAP) catalyzes the transcription of DNA into RNA using the four ribonucleoside triphosphates as substrates. This chain is DNA-directed RNA polymerase subunit Rpo11, found in Saccharolobus shibatae (strain ATCC 51178 / DSM 5389 / JCM 8931 / NBRC 15437 / B12) (Sulfolobus shibatae).